We begin with the raw amino-acid sequence, 143 residues long: Large ribosomal subunit protein uL11 (143 aa).

It belongs to the universal ribosomal protein uL11 family. As to quaternary structure, part of the ribosomal stalk of the 50S ribosomal subunit. Interacts with L10 and the large rRNA to form the base of the stalk. L10 forms an elongated spine to which L12 dimers bind in a sequential fashion forming a multimeric L10(L12)X complex. Post-translationally, one or more lysine residues are methylated.

Forms part of the ribosomal stalk which helps the ribosome interact with GTP-bound translation factors. The protein is Large ribosomal subunit protein uL11 of Ectopseudomonas mendocina (strain ymp) (Pseudomonas mendocina).